The primary structure comprises 350 residues: MSSSDNDEPKVVEISDDEMECEGVVEVNNEQSDEAKMREFAEITATDEIMAQSILQDVGWDLKRALDVFFGSDAFKETRNEAVMGPSSSAVGNQPVMTAEDLKGFELSLMSWNIDGLDGRSLATRMKAVATIVKKVNPDILFLQEVVDRDLEPIDKLQSLYKIYYSNKGCQYYTAILVSKMFEVEKHDVVHFQNSGMYRTLQIVEGSIGGMKVFLVNTHLESMRDHRAQRMAQFSFCMDRCAEIIANNPGCFLFFGGDLNLRDEEISSIPDGVLDAWVSAGCDTKTKWTWDTYKNDNKQGFNGAKMRFDRIYWHGPFNQVHFSLEGRQRIRSCLCFPSDHWAINATFSAV.

The interaction with 5' end of substrate DNA stretch occupies residues 113-117; that stretch reads NIDGL. Mg(2+)-binding residues include aspartate 115 and glutamate 145. Residues 219–224 are interaction with 5' end of substrate DNA; sequence HLESMR. The active-site Proton donor/acceptor is the aspartate 258. Positions 260–262 are interaction with 5' end of substrate DNA; sequence NLR.

It belongs to the CCR4/nocturin family. TTRAP/TDP2 subfamily. Mg(2+) serves as cofactor. Mn(2+) is required as a cofactor.

It is found in the nucleus. The protein resides in the PML body. In terms of biological role, DNA repair enzyme that can remove a variety of covalent adducts from DNA through hydrolysis of a 5'-phosphodiester bond, giving rise to DNA with a free 5' phosphate. Catalyzes the hydrolysis of dead-end complexes between DNA and the topoisomerase 2 (top2) active site tyrosine residue. Hydrolyzes 5'-phosphoglycolates on protruding 5' ends on DNA double-strand breaks (DSBs) due to DNA damage by radiation and free radicals. The protein is 5'-tyrosyl-DNA phosphodiesterase of Caenorhabditis briggsae.